The following is a 101-amino-acid chain: RNA silencing suppressor (101 aa).

The segment at 47–50 is basic; it reads RRRR. The C4-type zinc finger occupies 57–78; the sequence is CPRCARVSPGFYFTTRCDGKTC.

Belongs to the carlaviruses nucleic acid-binding protein family.

Functionally, suppressor of viral-induced RNA silencing. The potential mechanism of action is based on sequestering siRNAs. This chain is RNA silencing suppressor (TUC), found in Dianthus caryophyllus (Carnation).